The primary structure comprises 262 residues: tRNA (guanine-N(1)-)-methyltransferase (262 aa).

S-adenosyl-L-methionine contacts are provided by residues G113 and 137–142; that span reads IGDYVL.

This sequence belongs to the RNA methyltransferase TrmD family. In terms of assembly, homodimer.

The protein localises to the cytoplasm. It carries out the reaction guanosine(37) in tRNA + S-adenosyl-L-methionine = N(1)-methylguanosine(37) in tRNA + S-adenosyl-L-homocysteine + H(+). Functionally, specifically methylates guanosine-37 in various tRNAs. This Saccharopolyspora erythraea (strain ATCC 11635 / DSM 40517 / JCM 4748 / NBRC 13426 / NCIMB 8594 / NRRL 2338) protein is tRNA (guanine-N(1)-)-methyltransferase.